A 906-amino-acid polypeptide reads, in one-letter code: Protein translocase subunit SecA (906 aa).

ATP-binding positions include Gln-89, Gly-107–Thr-111, and Asp-501. Residues Cys-891, Cys-893, Cys-902, and His-903 each contribute to the Zn(2+) site.

The protein belongs to the SecA family. Monomer and homodimer. Part of the essential Sec protein translocation apparatus which comprises SecA, SecYEG and auxiliary proteins SecDF-YajC and YidC. Requires Zn(2+) as cofactor.

The protein localises to the cell inner membrane. The protein resides in the cytoplasm. It catalyses the reaction ATP + H2O + cellular proteinSide 1 = ADP + phosphate + cellular proteinSide 2.. In terms of biological role, part of the Sec protein translocase complex. Interacts with the SecYEG preprotein conducting channel. Has a central role in coupling the hydrolysis of ATP to the transfer of proteins into and across the cell membrane, serving both as a receptor for the preprotein-SecB complex and as an ATP-driven molecular motor driving the stepwise translocation of polypeptide chains across the membrane. In Parvibaculum lavamentivorans (strain DS-1 / DSM 13023 / NCIMB 13966), this protein is Protein translocase subunit SecA.